Consider the following 425-residue polypeptide: MEPSATPGPQMGVPTGVGDPSLVPPDYEEEFLSYLWRDYLYPKQYEWVLIAAYVAVFLVALVGNTLVCLAVWRNHHMRTVTNYFIVNLSLADVLVTAICLPASLLVDITESWLFGHALCKVIPYLQAVSVSVAVLTLSFIALDRWYAIYHPLLFKSTARRARGSILGIWAVSPAVMVPQAAVMECSSVLPELANRTRLFSVCDERWADDLYPKIYHSCFFIVTYLAPLGLMAMAYFQIFRKLWGRQIPGTTSALVRNWKRPSDQLEDQGQGPGAEPPPRARAFLAEVKQMRARRKTAKMLMVVLLVFALCYLPISVLNVLKRVFGMFRQTSDREAVYACFTFSHWLVYANSAANPIIYNFLSGKFREQFKAAFSCCLPGLGPCGSLKAPSPRSSASHKSLSLQSRCSVSKISEHVVLTSVTTVLP.

Over 1 to 46 (MEPSATPGPQMGVPTGVGDPSLVPPDYEEEFLSYLWRDYLYPKQYE) the chain is Extracellular. The segment at 26–41 (DYEEEFLSYLWRDYLY) is required for response to orexin-A. A helical membrane pass occupies residues 47–67 (WVLIAAYVAVFLVALVGNTLV). Residues 68–82 (CLAVWRNHHMRTVTN) lie on the Cytoplasmic side of the membrane. A helical transmembrane segment spans residues 83–105 (YFIVNLSLADVLVTAICLPASLL). Over 106–119 (VDITESWLFGHALC) the chain is Extracellular. Cys119 and Cys202 form a disulfide bridge. Residues 120–140 (KVIPYLQAVSVSVAVLTLSFI) form a helical membrane-spanning segment. The Cytoplasmic segment spans residues 141–160 (ALDRWYAIYHPLLFKSTARR). A helical membrane pass occupies residues 161–182 (ARGSILGIWAVSPAVMVPQAAV). Residues 183-213 (MECSSVLPELANRTRLFSVCDERWADDLYPK) lie on the Extracellular side of the membrane. A helical transmembrane segment spans residues 214–235 (IYHSCFFIVTYLAPLGLMAMAY). The Cytoplasmic segment spans residues 236–298 (FQIFRKLWGR…QMRARRKTAK (63 aa)). A helical transmembrane segment spans residues 299-321 (MLMVVLLVFALCYLPISVLNVLK). Residues 322-336 (RVFGMFRQTSDREAV) lie on the Extracellular side of the membrane. The chain crosses the membrane as a helical span at residues 337–360 (YACFTFSHWLVYANSAANPIIYNF). Topologically, residues 361–425 (LSGKFREQFK…VLTSVTTVLP (65 aa)) are cytoplasmic.

Belongs to the G-protein coupled receptor 1 family.

The protein resides in the cell membrane. Functionally, moderately selective excitatory receptor for orexin-A and, with a lower affinity, for orexin-B neuropeptide. Triggers an increase in cytoplasmic Ca(2+) levels in response to orexin-A binding. This chain is Orexin/Hypocretin receptor type 1, found in Sus scrofa (Pig).